We begin with the raw amino-acid sequence, 109 residues long: Tektin-3 (109 aa).

This sequence belongs to the tektin family. Microtubule inner protein component of sperm flagellar doublet microtubules. Interacts with TEKT1, TEKT2, TEKT4 and TEKT5. Interacts with CCDC38. In terms of processing, N- and O-glycosylated. May be proteolytically processed during the epididymal transit of spermatozoa. Post-translationally, ubiquitinated, leading to its degradation. Deubiquitinated by USP16, promoting its stability.

The protein localises to the cytoplasm. It localises to the cytoskeleton. The protein resides in the cilium axoneme. Its subcellular location is the flagellum axoneme. It is found in the cytoplasmic vesicle. The protein localises to the secretory vesicle. It localises to the acrosome outer membrane. Microtubule inner protein (MIP) part of the dynein-decorated doublet microtubules (DMTs) in cilia and flagellar axoneme. Forms filamentous polymers in the walls of ciliary and flagellar microtubules. Required for normal sperm mobility. This Mesocricetus auratus (Golden hamster) protein is Tektin-3.